The chain runs to 226 residues: UPF0758 protein Spy49_0870 (226 aa).

The MPN domain occupies 103 to 225; that stretch reads SVLTSVQVAE…YYSFREKSTL (123 aa). Zn(2+) contacts are provided by histidine 174, histidine 176, and aspartate 187. The JAMM motif motif lies at 174 to 187; sequence HNHPSGNIEPSSND.

Belongs to the UPF0758 family.

In Streptococcus pyogenes serotype M49 (strain NZ131), this protein is UPF0758 protein Spy49_0870.